Here is a 58-residue protein sequence, read N- to C-terminus: Ribosome biogenesis protein Nop10 (58 aa).

Belongs to the NOP10 family.

Functionally, involved in ribosome biogenesis; more specifically in 18S rRNA pseudouridylation and in cleavage of pre-rRNA. The polypeptide is Ribosome biogenesis protein Nop10 (Methanobrevibacter smithii (strain ATCC 35061 / DSM 861 / OCM 144 / PS)).